A 93-amino-acid polypeptide reads, in one-letter code: Pyrimidine/purine nucleoside phosphorylase (93 aa).

It belongs to the nucleoside phosphorylase PpnP family.

The enzyme catalyses a purine D-ribonucleoside + phosphate = a purine nucleobase + alpha-D-ribose 1-phosphate. It catalyses the reaction adenosine + phosphate = alpha-D-ribose 1-phosphate + adenine. It carries out the reaction cytidine + phosphate = cytosine + alpha-D-ribose 1-phosphate. The catalysed reaction is guanosine + phosphate = alpha-D-ribose 1-phosphate + guanine. The enzyme catalyses inosine + phosphate = alpha-D-ribose 1-phosphate + hypoxanthine. It catalyses the reaction thymidine + phosphate = 2-deoxy-alpha-D-ribose 1-phosphate + thymine. It carries out the reaction uridine + phosphate = alpha-D-ribose 1-phosphate + uracil. The catalysed reaction is xanthosine + phosphate = alpha-D-ribose 1-phosphate + xanthine. Its function is as follows. Catalyzes the phosphorolysis of diverse nucleosides, yielding D-ribose 1-phosphate and the respective free bases. Can use uridine, adenosine, guanosine, cytidine, thymidine, inosine and xanthosine as substrates. Also catalyzes the reverse reactions. This Marinobacter nauticus (strain ATCC 700491 / DSM 11845 / VT8) (Marinobacter aquaeolei) protein is Pyrimidine/purine nucleoside phosphorylase.